The chain runs to 232 residues: Vacuolar iron transporter homolog 1 (232 aa).

Topologically, residues 1–59 are cytoplasmic; sequence MAIDLGCHVGCASPETKQEETADPTAAPVVVDDVEAAAGGRRPGDGGGVNYVARAQWLR. Residues 60–80 traverse the membrane as a helical segment; it reads AAVLGANDGLVSVASLMVGVG. At 81 to 89 the chain is on the vacuolar side; sequence AANGTRRAM. Residues 90-110 form a helical membrane-spanning segment; it reads LVSGLAGLVAGACSMAIGEFV. Residues 111–148 are Cytoplasmic-facing; the sequence is SVYAQCDIQAAQIERARGGKDADGGEEEEELPSPTMAA. The chain crosses the membrane as a helical span at residues 149-169; that stretch reads VASALSFAAGAALPLLAGGFV. At 170-175 the chain is on the vacuolar side; the sequence is RPWAAR. A helical membrane pass occupies residues 176–196; that stretch reads VAAVCAASSLGLAGFGVASAY. The Cytoplasmic segment spans residues 197–208; the sequence is LGGAGVARSGVR. A helical transmembrane segment spans residues 209–229; it reads MLVGGWLAMAVTYGVLKLFGM. Residues 230–232 lie on the Vacuolar side of the membrane; that stretch reads HGV.

This sequence belongs to the CCC1 family.

The protein resides in the vacuole membrane. The enzyme catalyses Fe(2+)(in) = Fe(2+)(out). Its function is as follows. Probable vacuolar iron transporter that may be involved in the regulation of iron distribution throughout the plant. This is Vacuolar iron transporter homolog 1 from Oryza sativa subsp. japonica (Rice).